Here is an 87-residue protein sequence, read N- to C-terminus: Small ribosomal subunit protein uS17 (87 aa).

It belongs to the universal ribosomal protein uS17 family. Part of the 30S ribosomal subunit.

One of the primary rRNA binding proteins, it binds specifically to the 5'-end of 16S ribosomal RNA. The protein is Small ribosomal subunit protein uS17 of Neisseria meningitidis serogroup C (strain 053442).